The chain runs to 329 residues: 1-phosphatidylinositol phosphodiesterase (329 aa).

The signal sequence occupies residues 1–31 (MSNKKLILKLFICSTIFITFVFALHDKRVVA). The 144-residue stretch at 51-194 (NIPLARISIP…ARGKIVLLKR (144 aa)) folds into the PI-PLC X-box domain. Residue histidine 63 is the Proton acceptor of the active site. The active-site Proton donor is the histidine 113.

It is found in the secreted. It catalyses the reaction a 1,2-diacyl-sn-glycero-3-phospho-(1D-myo-inositol) = 1D-myo-inositol 1,2-cyclic phosphate + a 1,2-diacyl-sn-glycerol. Its function is as follows. Cleaves glycosylphosphatidylinositol (GPI) and phosphatidylinositol (PI) anchors but not PI phosphates. The sequence is that of 1-phosphatidylinositol phosphodiesterase from Bacillus thuringiensis.